Consider the following 121-residue polypeptide: Large ribosomal subunit protein bL12 (121 aa).

It belongs to the bacterial ribosomal protein bL12 family. Homodimer. Part of the ribosomal stalk of the 50S ribosomal subunit. Forms a multimeric L10(L12)X complex, where L10 forms an elongated spine to which 2 to 4 L12 dimers bind in a sequential fashion. Binds GTP-bound translation factors.

Its function is as follows. Forms part of the ribosomal stalk which helps the ribosome interact with GTP-bound translation factors. Is thus essential for accurate translation. This Pelagibacter ubique (strain HTCC1062) protein is Large ribosomal subunit protein bL12.